A 292-amino-acid polypeptide reads, in one-letter code: Elongation factor Ts (292 aa).

The involved in Mg(2+) ion dislocation from EF-Tu stretch occupies residues 80–83; it reads TDFV.

This sequence belongs to the EF-Ts family.

The protein resides in the cytoplasm. Associates with the EF-Tu.GDP complex and induces the exchange of GDP to GTP. It remains bound to the aminoacyl-tRNA.EF-Tu.GTP complex up to the GTP hydrolysis stage on the ribosome. This is Elongation factor Ts from Cupriavidus taiwanensis (strain DSM 17343 / BCRC 17206 / CCUG 44338 / CIP 107171 / LMG 19424 / R1) (Ralstonia taiwanensis (strain LMG 19424)).